A 264-amino-acid chain; its full sequence is Thymidylate synthase (264 aa).

Position 21 (Arg21) interacts with dUMP. His51 is a (6R)-5,10-methylene-5,6,7,8-tetrahydrofolate binding site. 126–127 (RR) contacts dUMP. Cys146 (nucleophile) is an active-site residue. DUMP contacts are provided by residues 166-169 (RSAD), Asn177, and 207-209 (HIY). Residue Asp169 participates in (6R)-5,10-methylene-5,6,7,8-tetrahydrofolate binding. Position 263 (Ala263) interacts with (6R)-5,10-methylene-5,6,7,8-tetrahydrofolate.

Belongs to the thymidylate synthase family. Bacterial-type ThyA subfamily. In terms of assembly, homodimer.

The protein localises to the cytoplasm. It catalyses the reaction dUMP + (6R)-5,10-methylene-5,6,7,8-tetrahydrofolate = 7,8-dihydrofolate + dTMP. It functions in the pathway pyrimidine metabolism; dTTP biosynthesis. In terms of biological role, catalyzes the reductive methylation of 2'-deoxyuridine-5'-monophosphate (dUMP) to 2'-deoxythymidine-5'-monophosphate (dTMP) while utilizing 5,10-methylenetetrahydrofolate (mTHF) as the methyl donor and reductant in the reaction, yielding dihydrofolate (DHF) as a by-product. This enzymatic reaction provides an intracellular de novo source of dTMP, an essential precursor for DNA biosynthesis. This is Thymidylate synthase from Rhizobium meliloti (strain 1021) (Ensifer meliloti).